We begin with the raw amino-acid sequence, 568 residues long: Proline--tRNA ligase (568 aa).

Belongs to the class-II aminoacyl-tRNA synthetase family. ProS type 1 subfamily. Homodimer.

It localises to the cytoplasm. It catalyses the reaction tRNA(Pro) + L-proline + ATP = L-prolyl-tRNA(Pro) + AMP + diphosphate. Catalyzes the attachment of proline to tRNA(Pro) in a two-step reaction: proline is first activated by ATP to form Pro-AMP and then transferred to the acceptor end of tRNA(Pro). As ProRS can inadvertently accommodate and process non-cognate amino acids such as alanine and cysteine, to avoid such errors it has two additional distinct editing activities against alanine. One activity is designated as 'pretransfer' editing and involves the tRNA(Pro)-independent hydrolysis of activated Ala-AMP. The other activity is designated 'posttransfer' editing and involves deacylation of mischarged Ala-tRNA(Pro). The misacylated Cys-tRNA(Pro) is not edited by ProRS. The chain is Proline--tRNA ligase from Chromobacterium violaceum (strain ATCC 12472 / DSM 30191 / JCM 1249 / CCUG 213 / NBRC 12614 / NCIMB 9131 / NCTC 9757 / MK).